We begin with the raw amino-acid sequence, 428 residues long: Enolase (428 aa).

Glutamine 163 provides a ligand contact to (2R)-2-phosphoglycerate. Glutamate 205 functions as the Proton donor in the catalytic mechanism. 3 residues coordinate Mg(2+): aspartate 242, glutamate 283, and aspartate 310. (2R)-2-phosphoglycerate is bound by residues lysine 335, arginine 364, serine 365, and lysine 386. Residue lysine 335 is the Proton acceptor of the active site.

This sequence belongs to the enolase family. The cofactor is Mg(2+).

It localises to the cytoplasm. The protein resides in the secreted. It is found in the cell surface. It carries out the reaction (2R)-2-phosphoglycerate = phosphoenolpyruvate + H2O. Its pathway is carbohydrate degradation; glycolysis; pyruvate from D-glyceraldehyde 3-phosphate: step 4/5. Its function is as follows. Catalyzes the reversible conversion of 2-phosphoglycerate (2-PG) into phosphoenolpyruvate (PEP). It is essential for the degradation of carbohydrates via glycolysis. The protein is Enolase of Saccharopolyspora erythraea (strain ATCC 11635 / DSM 40517 / JCM 4748 / NBRC 13426 / NCIMB 8594 / NRRL 2338).